The following is a 411-amino-acid chain: Tyrosine--tRNA ligase (411 aa).

Tyrosine 34 provides a ligand contact to L-tyrosine. A 'HIGH' region motif is present at residues 39–48 (CTATSLHIGS). Residues tyrosine 171 and glutamine 175 each coordinate L-tyrosine. Positions 231 to 235 (KMGKT) match the 'KMSKS' region motif. An ATP-binding site is contributed by lysine 234. Residues 345-411 (ISAYKLFYNV…GKKRHILVKV (67 aa)) enclose the S4 RNA-binding domain.

This sequence belongs to the class-I aminoacyl-tRNA synthetase family. TyrS type 1 subfamily. In terms of assembly, homodimer.

It is found in the cytoplasm. The enzyme catalyses tRNA(Tyr) + L-tyrosine + ATP = L-tyrosyl-tRNA(Tyr) + AMP + diphosphate + H(+). Its function is as follows. Catalyzes the attachment of tyrosine to tRNA(Tyr) in a two-step reaction: tyrosine is first activated by ATP to form Tyr-AMP and then transferred to the acceptor end of tRNA(Tyr). This is Tyrosine--tRNA ligase from Rickettsia typhi (strain ATCC VR-144 / Wilmington).